Here is an 85-residue protein sequence, read N- to C-terminus: MDVQAAHEFGISIAQAARDLGAGIAVFALAGVGMGLGNIFSTLISSVARNPASRPHVFGIGMLGFALTEAVALFALLIAFLILFA.

Helical transmembrane passes span 20–40 (LGAG…GNIF) and 65–85 (FALT…ILFA).

This sequence belongs to the ATPase C chain family. In terms of assembly, F-type ATPases have 2 components, F(1) - the catalytic core - and F(0) - the membrane proton channel. F(1) has five subunits: alpha(3), beta(3), gamma(1), delta(1), epsilon(1). F(0) has three main subunits: a(1), b(2) and c(10-14). The alpha and beta chains form an alternating ring which encloses part of the gamma chain. F(1) is attached to F(0) by a central stalk formed by the gamma and epsilon chains, while a peripheral stalk is formed by the delta and b chains.

It is found in the cell inner membrane. F(1)F(0) ATP synthase produces ATP from ADP in the presence of a proton or sodium gradient. F-type ATPases consist of two structural domains, F(1) containing the extramembraneous catalytic core and F(0) containing the membrane proton channel, linked together by a central stalk and a peripheral stalk. During catalysis, ATP synthesis in the catalytic domain of F(1) is coupled via a rotary mechanism of the central stalk subunits to proton translocation. Its function is as follows. Key component of the F(0) channel; it plays a direct role in translocation across the membrane. A homomeric c-ring of between 10-14 subunits forms the central stalk rotor element with the F(1) delta and epsilon subunits. In Gluconobacter oxydans (strain 621H) (Gluconobacter suboxydans), this protein is ATP synthase subunit c.